Consider the following 691-residue polypeptide: DNA ligase (691 aa).

NAD(+)-binding positions include 41–45 (DAEYD), 90–91 (SL), and E130. K132 serves as the catalytic N6-AMP-lysine intermediate. Positions 153, 190, 307, and 331 each coordinate NAD(+). The Zn(2+) site is built by C425, C428, C443, and C449. Residues 610–691 (APQGVLAGKT…MHTLLEGHAR (82 aa)) form the BRCT domain.

This sequence belongs to the NAD-dependent DNA ligase family. LigA subfamily. Requires Mg(2+) as cofactor. It depends on Mn(2+) as a cofactor.

The catalysed reaction is NAD(+) + (deoxyribonucleotide)n-3'-hydroxyl + 5'-phospho-(deoxyribonucleotide)m = (deoxyribonucleotide)n+m + AMP + beta-nicotinamide D-nucleotide.. DNA ligase that catalyzes the formation of phosphodiester linkages between 5'-phosphoryl and 3'-hydroxyl groups in double-stranded DNA using NAD as a coenzyme and as the energy source for the reaction. It is essential for DNA replication and repair of damaged DNA. In Burkholderia mallei (strain NCTC 10247), this protein is DNA ligase.